The chain runs to 453 residues: Serine/threonine-protein phosphatase 2A regulatory subunit B'' subunit gamma (453 aa).

2 consecutive EF-hand domains span residues 273-308 and 341-376; these read PSALRVYGQYLNLDKDHNGMLSKEELSRYGTATMTN and KEPAALQYIFKLLDIENKGYLNVFSLNYFFRAIQEL. 5 residues coordinate Ca(2+): Asp286, Asp288, Asn290, Met292, and Glu297.

Interacts with MCM3AP/GANP, PPP5C, and the phosphatase 2A core enzyme composed of the PPP2CA catalytic subunit and the constant regulatory subunit PPP2R1A. Finds in a complex with ABCB1, TFPI2 and PPP2R3C; leading to the dephosphorylation of ABCB1.

The protein localises to the nucleus. Its subcellular location is the cytoplasm. Functionally, may regulate MCM3AP phosphorylation through phosphatase recruitment. May act as a negative regulator of ABCB1 expression and function through the dephosphorylation of ABCB1 by TFPI2/PPP2R3C complex. May play a role in the activation-induced cell death of B-cells. In Bos taurus (Bovine), this protein is Serine/threonine-protein phosphatase 2A regulatory subunit B'' subunit gamma (PPP2R3C).